The primary structure comprises 145 residues: SsrA-binding protein (145 aa).

This sequence belongs to the SmpB family.

The protein resides in the cytoplasm. Required for rescue of stalled ribosomes mediated by trans-translation. Binds to transfer-messenger RNA (tmRNA), required for stable association of tmRNA with ribosomes. tmRNA and SmpB together mimic tRNA shape, replacing the anticodon stem-loop with SmpB. tmRNA is encoded by the ssrA gene; the 2 termini fold to resemble tRNA(Ala) and it encodes a 'tag peptide', a short internal open reading frame. During trans-translation Ala-aminoacylated tmRNA acts like a tRNA, entering the A-site of stalled ribosomes, displacing the stalled mRNA. The ribosome then switches to translate the ORF on the tmRNA; the nascent peptide is terminated with the 'tag peptide' encoded by the tmRNA and targeted for degradation. The ribosome is freed to recommence translation, which seems to be the essential function of trans-translation. The chain is SsrA-binding protein from Mycoplasmopsis pulmonis (strain UAB CTIP) (Mycoplasma pulmonis).